The sequence spans 722 residues: Glycine--tRNA ligase beta subunit (722 aa).

The protein belongs to the class-II aminoacyl-tRNA synthetase family. As to quaternary structure, tetramer of two alpha and two beta subunits.

Its subcellular location is the cytoplasm. It catalyses the reaction tRNA(Gly) + glycine + ATP = glycyl-tRNA(Gly) + AMP + diphosphate. This chain is Glycine--tRNA ligase beta subunit, found in Xylella fastidiosa (strain M12).